The sequence spans 205 residues: Putative 3-methyladenine DNA glycosylase (205 aa).

Belongs to the DNA glycosylase MPG family.

This Bacillus cereus (strain Q1) protein is Putative 3-methyladenine DNA glycosylase.